Reading from the N-terminus, the 254-residue chain is NAD-dependent protein deacylase (254 aa).

A Deacetylase sirtuin-type domain is found at 1–250; it reads MERLEEARKR…LPPSPEDQAE (250 aa). 22-41 contributes to the NAD(+) binding site; sequence GAGISKPSGIPTFRDAEGLW. Substrate contacts are provided by Y66 and R69. 104-107 contacts NAD(+); that stretch reads QNVD. The Proton acceptor role is filled by H122. Positions 130, 133, 149, and 152 each coordinate Zn(2+). Residues 189 to 191, 215 to 217, and A233 each bind NAD(+); these read GTS and NPE.

This sequence belongs to the sirtuin family. Class III subfamily. The cofactor is Zn(2+).

It is found in the cytoplasm. It carries out the reaction N(6)-acetyl-L-lysyl-[protein] + NAD(+) + H2O = 2''-O-acetyl-ADP-D-ribose + nicotinamide + L-lysyl-[protein]. It catalyses the reaction N(6)-succinyl-L-lysyl-[protein] + NAD(+) + H2O = 2''-O-succinyl-ADP-D-ribose + nicotinamide + L-lysyl-[protein]. NAD-dependent lysine deacetylase and desuccinylase that specifically removes acetyl and succinyl groups on target proteins. Modulates the activities of several proteins which are inactive in their acylated form. In Thermus thermophilus (strain ATCC BAA-163 / DSM 7039 / HB27), this protein is NAD-dependent protein deacylase.